We begin with the raw amino-acid sequence, 343 residues long: 3-oxopimeloyl-[acyl-carrier-protein] synthase (343 aa).

Catalysis depends on residues Cys132 and His272. Positions 273 to 277 are ACP-binding; sequence QANHR. Residue Asn302 is part of the active site.

It belongs to the thiolase-like superfamily. BioZ family.

The catalysed reaction is malonyl-[ACP] + an acyl-CoA + H(+) = a 3-oxoacyl-[ACP] + CO2 + CoA. The enzyme catalyses glutaryl-CoA + malonyl-[ACP] + H(+) = 3-oxo-6-carboxyhexanoyl-[ACP] + CO2 + CoA. It functions in the pathway cofactor biosynthesis; biotin biosynthesis. Functionally, involved in the formation of the biotin precursor pimeloyl-ACP. Catalyzes the condensation of glutaryl-CoA, an intermediate in lysine degradation, with malonyl-ACP to produce 3-oxopimeloyl-ACP. The polypeptide is 3-oxopimeloyl-[acyl-carrier-protein] synthase (Rhodothermus marinus (strain ATCC 43812 / DSM 4252 / R-10) (Rhodothermus obamensis)).